An 89-amino-acid polypeptide reads, in one-letter code: Probable Fe(2+)-trafficking protein (89 aa).

Belongs to the Fe(2+)-trafficking protein family.

In terms of biological role, could be a mediator in iron transactions between iron acquisition and iron-requiring processes, such as synthesis and/or repair of Fe-S clusters in biosynthetic enzymes. In Stenotrophomonas maltophilia (strain K279a), this protein is Probable Fe(2+)-trafficking protein.